The sequence spans 345 residues: S-adenosylmethionine:tRNA ribosyltransferase-isomerase (345 aa).

This sequence belongs to the QueA family. In terms of assembly, monomer.

The protein resides in the cytoplasm. It catalyses the reaction 7-aminomethyl-7-carbaguanosine(34) in tRNA + S-adenosyl-L-methionine = epoxyqueuosine(34) in tRNA + adenine + L-methionine + 2 H(+). The protein operates within tRNA modification; tRNA-queuosine biosynthesis. Transfers and isomerizes the ribose moiety from AdoMet to the 7-aminomethyl group of 7-deazaguanine (preQ1-tRNA) to give epoxyqueuosine (oQ-tRNA). This chain is S-adenosylmethionine:tRNA ribosyltransferase-isomerase, found in Anaeromyxobacter sp. (strain K).